The following is a 347-amino-acid chain: Probable dual-specificity RNA methyltransferase RlmN (347 aa).

The active-site Proton acceptor is E94. One can recognise a Radical SAM core domain in the interval 100-334 (TETRTTACVS…AKVRHSRGKD (235 aa)). The cysteines at positions 107 and 339 are disulfide-linked. [4Fe-4S] cluster-binding residues include C114, C118, and C121. Residues 165-166 (GE), S197, 220-222 (SLH), and N296 contribute to the S-adenosyl-L-methionine site. The active-site S-methylcysteine intermediate is the C339.

It belongs to the radical SAM superfamily. RlmN family. The cofactor is [4Fe-4S] cluster.

It localises to the cytoplasm. It catalyses the reaction adenosine(2503) in 23S rRNA + 2 reduced [2Fe-2S]-[ferredoxin] + 2 S-adenosyl-L-methionine = 2-methyladenosine(2503) in 23S rRNA + 5'-deoxyadenosine + L-methionine + 2 oxidized [2Fe-2S]-[ferredoxin] + S-adenosyl-L-homocysteine. It carries out the reaction adenosine(37) in tRNA + 2 reduced [2Fe-2S]-[ferredoxin] + 2 S-adenosyl-L-methionine = 2-methyladenosine(37) in tRNA + 5'-deoxyadenosine + L-methionine + 2 oxidized [2Fe-2S]-[ferredoxin] + S-adenosyl-L-homocysteine. In terms of biological role, specifically methylates position 2 of adenine 2503 in 23S rRNA and position 2 of adenine 37 in tRNAs. The sequence is that of Probable dual-specificity RNA methyltransferase RlmN from Flavobacterium psychrophilum (strain ATCC 49511 / DSM 21280 / CIP 103535 / JIP02/86).